The following is a 344-amino-acid chain: Phosphoribosylformylglycinamidine cyclo-ligase (344 aa).

The protein belongs to the AIR synthase family.

It localises to the cytoplasm. It carries out the reaction 2-formamido-N(1)-(5-O-phospho-beta-D-ribosyl)acetamidine + ATP = 5-amino-1-(5-phospho-beta-D-ribosyl)imidazole + ADP + phosphate + H(+). It participates in purine metabolism; IMP biosynthesis via de novo pathway; 5-amino-1-(5-phospho-D-ribosyl)imidazole from N(2)-formyl-N(1)-(5-phospho-D-ribosyl)glycinamide: step 2/2. This Exiguobacterium sibiricum (strain DSM 17290 / CCUG 55495 / CIP 109462 / JCM 13490 / 255-15) protein is Phosphoribosylformylglycinamidine cyclo-ligase.